The following is a 279-amino-acid chain: Urease accessory protein UreD (279 aa).

This sequence belongs to the UreD family. As to quaternary structure, ureD, UreF and UreG form a complex that acts as a GTP-hydrolysis-dependent molecular chaperone, activating the urease apoprotein by helping to assemble the nickel containing metallocenter of UreC. The UreE protein probably delivers the nickel.

Its subcellular location is the cytoplasm. Required for maturation of urease via the functional incorporation of the urease nickel metallocenter. The sequence is that of Urease accessory protein UreD from Nostoc sp. (strain PCC 7120 / SAG 25.82 / UTEX 2576).